An 865-amino-acid polypeptide reads, in one-letter code: Protein translocase subunit SecA (865 aa).

ATP contacts are provided by residues Gln85, 103–107, and Asp505; that span reads GEGKT. The Zn(2+) site is built by Cys847, Cys849, Cys858, and His859.

This sequence belongs to the SecA family. As to quaternary structure, monomer and homodimer. Part of the essential Sec protein translocation apparatus which comprises SecA, SecYEG and auxiliary proteins SecDF. Other proteins may also be involved. It depends on Zn(2+) as a cofactor.

It localises to the cell membrane. The protein localises to the cytoplasm. It catalyses the reaction ATP + H2O + cellular proteinSide 1 = ADP + phosphate + cellular proteinSide 2.. Part of the Sec protein translocase complex. Interacts with the SecYEG preprotein conducting channel. Has a central role in coupling the hydrolysis of ATP to the transfer of proteins into and across the cell membrane, serving as an ATP-driven molecular motor driving the stepwise translocation of polypeptide chains across the membrane. The sequence is that of Protein translocase subunit SecA from Lactococcus lactis subsp. lactis (strain IL1403) (Streptococcus lactis).